Consider the following 372-residue polypeptide: MFNENPIKRRPSTRIYVGNVPIGDGAPIAVQSMTNTRTTDVAATVAQIRALENVGADIVRVSVPTMDAAEAFRQIKQQVKVPLVADIHFDYRIALKVAEYGVDCLRINPGNIGNEERIRAVVDCARDKNIPIRIGVNGGSLEKDLMDKYKEPTPEALLESAMRHVDILDRLNFDQFKVSVKASDVFLAVESYRLLAKQIKQPLHLGITEAGGARAGAVKSAVGLGMLLAEGIGDTLRISLAADPVEEVKVGFDILKSLRIRSRGINFIACPSCSRQEFDVISTVNELERRLEDVTTAMDVSIIGCVVNGPGEALVSHLGLAGGHKKSGYYDDGIRQKERFDNDNLVDALEAKIRAKASLMANRIPVQEGDAD.

[4Fe-4S] cluster is bound by residues Cys270, Cys273, Cys305, and Glu312.

The protein belongs to the IspG family. The cofactor is [4Fe-4S] cluster.

The catalysed reaction is (2E)-4-hydroxy-3-methylbut-2-enyl diphosphate + oxidized [flavodoxin] + H2O + 2 H(+) = 2-C-methyl-D-erythritol 2,4-cyclic diphosphate + reduced [flavodoxin]. The protein operates within isoprenoid biosynthesis; isopentenyl diphosphate biosynthesis via DXP pathway; isopentenyl diphosphate from 1-deoxy-D-xylulose 5-phosphate: step 5/6. In terms of biological role, converts 2C-methyl-D-erythritol 2,4-cyclodiphosphate (ME-2,4cPP) into 1-hydroxy-2-methyl-2-(E)-butenyl 4-diphosphate. The protein is 4-hydroxy-3-methylbut-2-en-1-yl diphosphate synthase (flavodoxin) of Shewanella amazonensis (strain ATCC BAA-1098 / SB2B).